Here is an 82-residue protein sequence, read N- to C-terminus: Conotoxin MiK42 (82 aa).

The N-terminal stretch at methionine 1–threonine 22 is a signal peptide. Positions aspartate 23–threonine 49 are excised as a propeptide. Cystine bridges form between cysteine 52/cysteine 67, cysteine 59/cysteine 70, and cysteine 66/cysteine 80.

This sequence belongs to the conotoxin O1 superfamily. In terms of tissue distribution, expressed by the venom duct.

It localises to the secreted. The protein is Conotoxin MiK42 of Conus miles (Soldier cone).